Reading from the N-terminus, the 228-residue chain is Prolactin-2B1 (228 aa).

Positions Met1–Ser31 are cleaved as a signal peptide. 2 disulfides stabilise this stretch: Cys89/Cys194 and Cys203/Cys228. Asn173 carries N-linked (GlcNAc...) asparagine glycosylation.

It belongs to the somatotropin/prolactin family. Expression restricted to the placenta in trophoblast cells within the labyrinth zone.

The protein resides in the secreted. The protein is Prolactin-2B1 (Prl2b1) of Rattus norvegicus (Rat).